Here is a 262-residue protein sequence, read N- to C-terminus: Small ribosomal subunit protein uS2 (262 aa).

The interval 240 to 262 is disordered; it reads NLDEKEESQEAESTEENTTVESN. A compositionally biased stretch (acidic residues) spans 243 to 254; that stretch reads EKEESQEAESTE.

Belongs to the universal ribosomal protein uS2 family.

The polypeptide is Small ribosomal subunit protein uS2 (Staphylococcus haemolyticus (strain JCSC1435)).